The primary structure comprises 372 residues: MATFSKLSERKRSTFIKYSREIRQSVQYDREAQIVKFNYHLKRPHELKDVLDKTFAPIVFEVSSTKKVESMVELAAKMDKVEGKGGHNAVAEEITKIVRADDIWTLLSGVEVTIQKRAFKRSLRAELKYVLITSFFNCSRHSDLKNADPTKFELVKNRYLNRVLRVLVCETKTRKPRYIYFFPVNKKTDPLIALHDLFSEAEPVPKSRASHQKTDQEWQMLRDSLLTNYDRFIATHAKQAVFGIKHGPKSHLGRHLMSSYLSHTNHGQWVSPFGNWSAGKDTVESNVARAKYVHIQADIPDELFAFLSQYYIQTPSGDFELIDSSEQPTTFINNLSTQEDISKSYGTWTQVVGQDVLEYVHSYAMGKLGIRK.

The Tyr recombinase Flp-type domain occupies 85 to 367 (GGHNAVAEEI…EYVHSYAMGK (283 aa)). Tyr-292 (O-(3'-phospho-DNA)-tyrosine intermediate) is an active-site residue.

The protein belongs to the 'phage' integrase family.

Functionally, catalyzes the recombination between the large inverted repetitions of the plasmid. This is Recombinase Flp protein from Lachancea fermentati (Zygosaccharomyces fermentati).